A 41-amino-acid polypeptide reads, in one-letter code: Large ribosomal subunit protein bL36 (41 aa).

This sequence belongs to the bacterial ribosomal protein bL36 family.

This chain is Large ribosomal subunit protein bL36, found in Maricaulis maris (strain MCS10) (Caulobacter maris).